A 333-amino-acid polypeptide reads, in one-letter code: Taste receptor type 2 member 38 (333 aa).

Topologically, residues 1–17 (MLTLTRIHTVSYEVRST) are extracellular. A helical transmembrane segment spans residues 18–38 (FLFISVLEFAVGFLTNAFVFL). The Cytoplasmic segment spans residues 39 to 55 (VNFWDVVKRQPLSNSDC). A helical membrane pass occupies residues 56–76 (VLLCLSISRLFLHGLLFLSAI). Residues 77–94 (QLTHFQKLSEPLNHSYQA) lie on the Extracellular side of the membrane. Residues 95-115 (INMLWMIANQANLWLAACLSL) traverse the membrane as a helical segment. Topologically, residues 116 to 142 (LYCSKLIRFSHTFLICLASWVSRKISQ) are cytoplasmic. A helical membrane pass occupies residues 143-163 (MLLGIILCSCICTVLCVWCFF). Residues 164–190 (SRPHFTVTTVLFMNNNTRLNWQIKDLN) are Extracellular-facing. Residue Asn-178 is glycosylated (N-linked (GlcNAc...) asparagine). A helical transmembrane segment spans residues 191 to 211 (LFYSFLFCYLWSVPPFLLFLV). At 212-251 (SSGMLTVSLGRHMRTMKVYTRDSRDPSLEAHIKALKSLVS) the chain is on the cytoplasmic side. Residues 252-272 (FFCFFVISSCAAFISVPLLIL) form a helical membrane-spanning segment. Residues 273–276 (WRDK) lie on the Extracellular side of the membrane. A helical membrane pass occupies residues 277-297 (IGVMVCVGIMAACPSGHAAVL). The Cytoplasmic portion of the chain corresponds to 298–333 (ISGNAKLRRAVTTILLWAQSSLKVRADHKADSRTLC).

This sequence belongs to the G-protein coupled receptor T2R family.

It is found in the membrane. Receptor that may play a role in the perception of bitterness and is gustducin-linked. May play a role in sensing the chemical composition of the gastrointestinal content. The activity of this receptor may stimulate alpha gustducin, mediate PLC-beta-2 activation and lead to the gating of TRPM5. The protein is Taste receptor type 2 member 38 (TAS2R38) of Pan paniscus (Pygmy chimpanzee).